Reading from the N-terminus, the 133-residue chain is Cytidine deaminase (133 aa).

Residues 4 to 126 form the CMP/dCMP-type deaminase domain; sequence VDWNMLRGNA…DLLPDAFGLD (123 aa). 45–47 contributes to the substrate binding site; sequence NVE. A Zn(2+)-binding site is contributed by Cys56. Glu58 serves as the catalytic Proton donor. Residues Cys89 and Cys92 each coordinate Zn(2+).

This sequence belongs to the cytidine and deoxycytidylate deaminase family. In terms of assembly, homotetramer. Requires Zn(2+) as cofactor.

The catalysed reaction is cytidine + H2O + H(+) = uridine + NH4(+). It carries out the reaction 2'-deoxycytidine + H2O + H(+) = 2'-deoxyuridine + NH4(+). Functionally, recycles cytidine and 2-deoxycytidine for uridine and 2-deoxyuridine synthesis, respectively. Catalyzes the hydrolytic deamination of cytidine and 2-deoxycytidine to form, respectively, uridine and 2-deoxyuridine. This Mycobacterium tuberculosis (strain CDC 1551 / Oshkosh) protein is Cytidine deaminase (cdd).